The following is a 180-amino-acid chain: MKCLLLALGLALACAAQAIIVTQTMKGLDIQKVAGTWYSLAMAASDISLLDAQSAPLRVYVEELKPTPEGDLEILLQKWENGECAQKKIIAEKTKIPAVFKIDALNENKVLVLDTDYKKYLLFCMENSAEPEQSLACQCLVRTPEVDDEALEKFDKALKALPMHIRLSFNPTQLEEQCHV.

The signal sequence occupies residues 1–18 (MKCLLLALGLALACAAQA). Intrachain disulfides connect cysteine 84–cysteine 178, cysteine 124–cysteine 137, and cysteine 124–cysteine 139.

This sequence belongs to the calycin superfamily. Lipocalin family. In terms of assembly, under physiological conditions beta-lactoglobulin exists as an equilibrium mixture of monomeric and dimeric forms. Interaction with LMBR1L is controversial. In terms of processing, alternate disulfide bonds occur in equal amounts. Synthesized in mammary gland and secreted in milk.

It localises to the secreted. Primary component of whey, it binds retinol and is probably involved in the transport of that molecule. This is Beta-lactoglobulin (LGB) from Bubalus bubalis (Domestic water buffalo).